The chain runs to 510 residues: Inositol-3-phosphate synthase (510 aa).

Residues Gly70, Gly71, Asn72, Asn73, Asp143, Ile180, Gln190, Arg193, Thr230, Ala231, Asn232, Thr233, Gly281, Ser282, Asp306, Ser309, Asn340, Asn341, Asp342, Lys355, Gly393, Asp394, Asp422, and Ser423 each coordinate NAD(+).

The protein belongs to the myo-inositol 1-phosphate synthase family. NAD(+) serves as cofactor.

It is found in the cytoplasm. The protein resides in the cytosol. Its subcellular location is the nucleus. It catalyses the reaction D-glucose 6-phosphate = 1D-myo-inositol 3-phosphate. It functions in the pathway polyol metabolism; myo-inositol biosynthesis; myo-inositol from D-glucose 6-phosphate: step 1/2. Its function is as follows. Key enzyme in myo-inositol biosynthesis pathway that catalyzes the conversion of glucose 6-phosphate to 1-myo-inositol 1-phosphate in a NAD-dependent manner. The polypeptide is Inositol-3-phosphate synthase (Nicotiana tabacum (Common tobacco)).